A 257-amino-acid chain; its full sequence is uncharacterized protein (257 aa).

Disordered stretches follow at residues 1 to 164 and 225 to 257; these read MERS…AGAC and TAWS…RARA. Residues 10-28 show a composition bias toward basic and acidic residues; the sequence is CGEEPRSGSRRLPKAEGDK. The span at 54–65 shows a compositional bias: basic residues; sequence RPNRASGRRRRS. Over residues 125-139 the composition is skewed to pro residues; it reads RPTPRPCAGPAPPPA. The segment covering 144 to 162 has biased composition (basic residues); sequence RCRRPRRWPRAGRRGRRAG.

This is an uncharacterized protein from Homo sapiens (Human).